Consider the following 62-residue polypeptide: Sperm protamine P1 (62 aa).

The disordered stretch occupies residues 1 to 62 (MARYRHSRSR…RYSRRRRRRY (62 aa)).

It belongs to the protamine P1 family. As to expression, testis.

It localises to the nucleus. The protein resides in the chromosome. Its function is as follows. Protamines substitute for histones in the chromatin of sperm during the haploid phase of spermatogenesis. They compact sperm DNA into a highly condensed, stable and inactive complex. The chain is Sperm protamine P1 (PRM1) from Lagostrophus fasciatus (Banded hare-wallaby).